Consider the following 85-residue polypeptide: Large ribosomal subunit protein bL27 (85 aa).

The interval 1–20 (MATKKAGGSTRNGRDSEAKR) is disordered.

Belongs to the bacterial ribosomal protein bL27 family.

This chain is Large ribosomal subunit protein bL27, found in Haemophilus influenzae (strain ATCC 51907 / DSM 11121 / KW20 / Rd).